Here is a 306-residue protein sequence, read N- to C-terminus: tRNA dimethylallyltransferase (306 aa).

11 to 18 (GPTAVGKS) contacts ATP. 13–18 (TAVGKS) is a substrate binding site. The interaction with substrate tRNA stretch occupies residues 35–38 (DSIQ).

It belongs to the IPP transferase family. In terms of assembly, monomer. It depends on Mg(2+) as a cofactor.

The catalysed reaction is adenosine(37) in tRNA + dimethylallyl diphosphate = N(6)-dimethylallyladenosine(37) in tRNA + diphosphate. Catalyzes the transfer of a dimethylallyl group onto the adenine at position 37 in tRNAs that read codons beginning with uridine, leading to the formation of N6-(dimethylallyl)adenosine (i(6)A). The protein is tRNA dimethylallyltransferase of Borreliella burgdorferi (strain ZS7) (Borrelia burgdorferi).